The chain runs to 69 residues: Bacteriocin microcin B17 (69 aa).

Residues methionine 1–glycine 26 constitute a propeptide that is removed on maturation. The segment at residues glycine 39 to serine 40 is a cross-link (oxazole-4-carboxylic acid (Gly-Ser)). Positions serine 40–cysteine 41 form a cross-link, thiazole-4-carboxylic acid (Ser-Cys). 3 cross-links (thiazole-4-carboxylic acid (Gly-Cys)) span residues glycine 47–cysteine 48, glycine 50–cysteine 51, and glycine 54–cysteine 55. Residues cysteine 55–serine 56 constitute a cross-link (oxazole-4-carboxylic acid (Cys-Ser)). 2 cross-links (oxazole-4-carboxylic acid (Gly-Ser)) span residues glycine 61–serine 62 and glycine 64–serine 65.

The processed N-terminus does not resemble a typical secretion signal sequence. Post-translationally, maturation of thiazole and oxazole containing antibiotics involves the enzymatic condensation of a Cys, Ser or Thr with the alpha-carbonyl of the preceding amino acid to form a thioether or ether bond, then dehydration to form a double bond with the alpha-amino nitrogen. Thiazoline or oxazoline rings are dehydrogenated to form thiazole or oxazole rings.

In terms of biological role, this glycine-rich peptide antibiotic inhibits DNA replication in many enteric bacteria, that leads to induction of the SOS repair system, massive DNA degradation and cell death. B17 inhibits type II topoisomerase by trapping an enzyme - DNA cleavable complex. The sequence is that of Bacteriocin microcin B17 (mcbA) from Escherichia coli.